The following is a 213-amino-acid chain: Phosphatidylethanolamine N-methyltransferase A (213 aa).

Topologically, residues Met-1 to Glu-21 are lumenal. Positions Lys-22–Ala-42 form an intramembrane region, helical. Residues Arg-43 to Ile-54 lie on the Lumenal side of the membrane. Residues Cys-55–Leu-75 traverse the membrane as a helical segment. At Arg-76–Ser-102 the chain is on the cytoplasmic side. The chain crosses the membrane as a helical span at residues Tyr-103 to Thr-123. Residue Gly-107–Gly-109 participates in S-adenosyl-L-methionine binding. The Lumenal segment spans residues Gly-124 to Tyr-166. The chain crosses the membrane as a helical span at residues Lys-167 to Ile-187. Over Phe-188 to Lys-213 the chain is Cytoplasmic. Residue Glu-189–Glu-190 coordinates S-adenosyl-L-methionine.

This sequence belongs to the class VI-like SAM-binding methyltransferase superfamily. PEMT/PEM2 methyltransferase family.

The protein resides in the endoplasmic reticulum membrane. The protein localises to the mitochondrion membrane. The catalysed reaction is a 1,2-diacyl-sn-glycero-3-phospho-N-methylethanolamine + S-adenosyl-L-methionine = a 1,2-diacyl-sn-glycero-3-phospho-N,N-dimethylethanolamine + S-adenosyl-L-homocysteine + H(+). It carries out the reaction a 1,2-diacyl-sn-glycero-3-phospho-N,N-dimethylethanolamine + S-adenosyl-L-methionine = a 1,2-diacyl-sn-glycero-3-phosphocholine + S-adenosyl-L-homocysteine + H(+). It catalyses the reaction a 1,2-diacyl-sn-glycero-3-phosphoethanolamine + S-adenosyl-L-methionine = a 1,2-diacyl-sn-glycero-3-phospho-N-methylethanolamine + S-adenosyl-L-homocysteine + H(+). It functions in the pathway phospholipid metabolism; phosphatidylcholine biosynthesis. Functionally, catalyzes the three sequential steps of the methylation pathway of phosphatidylcholine biosynthesis, the SAM-dependent methylation of phosphatidylethanolamine (PE) to phosphatidylmonomethylethanolamine (PMME), PMME to phosphatidyldimethylethanolamine (PDME), and PDME to phosphatidylcholine (PC). The protein is Phosphatidylethanolamine N-methyltransferase A (pemtA) of Dictyostelium discoideum (Social amoeba).